A 351-amino-acid polypeptide reads, in one-letter code: Photosystem II D2 protein (351 aa).

Residues T39–T59 traverse the membrane as a helical segment. A chlorophyll a-binding site is contributed by H116. A helical transmembrane segment spans residues G123–P139. Pheophytin a is bound by residues Q128 and N141. A helical membrane pass occupies residues I151–A164. H196 provides a ligand contact to chlorophyll a. A helical membrane pass occupies residues G206 to D226. A plastoquinone is bound by residues H213 and F260. H213 provides a ligand contact to Fe cation. H267 lines the Fe cation pocket. Residues G277 to R293 traverse the membrane as a helical segment.

Belongs to the reaction center PufL/M/PsbA/D family. PSII is composed of 1 copy each of membrane proteins PsbA, PsbB, PsbC, PsbD, PsbE, PsbF, PsbH, PsbI, PsbJ, PsbK, PsbL, PsbM, PsbT, PsbX, PsbY, PsbZ, Psb30/Ycf12, at least 3 peripheral proteins of the oxygen-evolving complex and a large number of cofactors. It forms dimeric complexes. It depends on The D1/D2 heterodimer binds P680, chlorophylls that are the primary electron donor of PSII, and subsequent electron acceptors. It shares a non-heme iron and each subunit binds pheophytin, quinone, additional chlorophylls, carotenoids and lipids. There is also a Cl(-1) ion associated with D1 and D2, which is required for oxygen evolution. The PSII complex binds additional chlorophylls, carotenoids and specific lipids. as a cofactor.

It is found in the plastid. The protein localises to the chloroplast thylakoid membrane. It carries out the reaction 2 a plastoquinone + 4 hnu + 2 H2O = 2 a plastoquinol + O2. Photosystem II (PSII) is a light-driven water:plastoquinone oxidoreductase that uses light energy to abstract electrons from H(2)O, generating O(2) and a proton gradient subsequently used for ATP formation. It consists of a core antenna complex that captures photons, and an electron transfer chain that converts photonic excitation into a charge separation. The D1/D2 (PsbA/PsbD) reaction center heterodimer binds P680, the primary electron donor of PSII as well as several subsequent electron acceptors. D2 is needed for assembly of a stable PSII complex. This is Photosystem II D2 protein from Heterosigma akashiwo (strain NIES-293 / 8280G21-1).